The chain runs to 267 residues: MKAFLFAAAATLVITALSAPAFAGTPVTLRMDTTDADGRITLGDLFDGVSGPAANVVVAARMSATAVLEAGQVQMSARRAGYVWTNANGVRRIIVREGVDNGGVSSSAAPGAQLAGARLAGAPRANVEVLAYARSLSAGEIVQPQDLIWVKMAGAPADAPRDADAVIGLAAKRPLREGAPVGMKDVAAAQVIKSGDLITITYEDGGISLSLQGKAMAAAAAGDVFAVQNTLSKKIIQAVAVGPGAAAVGPQAQSLQARSQPLRFAAR.

An N-terminal signal peptide occupies residues 1-29 (MKAFLFAAAATLVITALSAPAFAGTPVTL).

In terms of assembly, flaD is a subunit of the flagellar transenvelope basal body.

It localises to the periplasm. The protein localises to the bacterial flagellum basal body. Its function is as follows. FlaD might be the structural protein of the distal basal body ring P, or it is necessary for the assembly of the P ring. This chain is Distal basal body ring component protein (flaD), found in Caulobacter vibrioides (strain ATCC 19089 / CIP 103742 / CB 15) (Caulobacter crescentus).